A 499-amino-acid polypeptide reads, in one-letter code: Glucose-6-phosphate isomerase (499 aa).

Residue Glu-352 is the Proton donor of the active site. Residues His-383 and Lys-487 contribute to the active site.

It belongs to the GPI family.

It is found in the cytoplasm. The catalysed reaction is alpha-D-glucose 6-phosphate = beta-D-fructose 6-phosphate. Its pathway is carbohydrate biosynthesis; gluconeogenesis. It functions in the pathway carbohydrate degradation; glycolysis; D-glyceraldehyde 3-phosphate and glycerone phosphate from D-glucose: step 2/4. In terms of biological role, catalyzes the reversible isomerization of glucose-6-phosphate to fructose-6-phosphate. In Legionella pneumophila (strain Lens), this protein is Glucose-6-phosphate isomerase.